The primary structure comprises 615 residues: Protein translocase subunit SecD (615 aa).

A run of 6 helical transmembrane segments spans residues Tyr-10 to Gly-30, Gln-452 to Tyr-472, Leu-477 to Leu-497, Met-504 to Ile-524, Gly-548 to Val-570, and Gly-585 to Tyr-605.

This sequence belongs to the SecD/SecF family. SecD subfamily. In terms of assembly, forms a complex with SecF. Part of the essential Sec protein translocation apparatus which comprises SecA, SecYEG and auxiliary proteins SecDF-YajC and YidC.

It localises to the cell inner membrane. Its function is as follows. Part of the Sec protein translocase complex. Interacts with the SecYEG preprotein conducting channel. SecDF uses the proton motive force (PMF) to complete protein translocation after the ATP-dependent function of SecA. The polypeptide is Protein translocase subunit SecD (Shigella flexneri).